Here is a 316-residue protein sequence, read N- to C-terminus: Ribosomal RNA small subunit methyltransferase H (316 aa).

S-adenosyl-L-methionine-binding positions include 35-37 (AGH), aspartate 55, phenylalanine 84, aspartate 105, and glutamine 112.

The protein belongs to the methyltransferase superfamily. RsmH family.

Its subcellular location is the cytoplasm. The enzyme catalyses cytidine(1402) in 16S rRNA + S-adenosyl-L-methionine = N(4)-methylcytidine(1402) in 16S rRNA + S-adenosyl-L-homocysteine + H(+). In terms of biological role, specifically methylates the N4 position of cytidine in position 1402 (C1402) of 16S rRNA. The protein is Ribosomal RNA small subunit methyltransferase H of Streptococcus thermophilus (strain ATCC BAA-250 / LMG 18311).